A 250-amino-acid polypeptide reads, in one-letter code: NADH-quinone oxidoreductase subunit C (250 aa).

It belongs to the complex I 30 kDa subunit family. As to quaternary structure, NDH-1 is composed of 14 different subunits. Subunits NuoB, C, D, E, F, and G constitute the peripheral sector of the complex.

It localises to the cell inner membrane. It catalyses the reaction a quinone + NADH + 5 H(+)(in) = a quinol + NAD(+) + 4 H(+)(out). Functionally, NDH-1 shuttles electrons from NADH, via FMN and iron-sulfur (Fe-S) centers, to quinones in the respiratory chain. The immediate electron acceptor for the enzyme in this species is believed to be ubiquinone. Couples the redox reaction to proton translocation (for every two electrons transferred, four hydrogen ions are translocated across the cytoplasmic membrane), and thus conserves the redox energy in a proton gradient. This Xanthomonas campestris pv. campestris (strain 8004) protein is NADH-quinone oxidoreductase subunit C.